A 318-amino-acid polypeptide reads, in one-letter code: DNA repair nuclease/redox regulator APEX1 (318 aa).

Positions 1 to 59 (MPKRGKKGAVVEDAEEPKTEPEAKKSKAGAKKNEKEAVGEGAVLYEDPPDQKTSPSGKS) are disordered. Positions 2–33 (PKRGKKGAVVEDAEEPKTEPEAKKSKAGAKKN) are necessary for interaction with YBX1, binding to RNA, association together with NPM1 to rRNA, endoribonuclease activity on abasic RNA and localization in the nucleoli. 2 positions are modified to N6-acetyllysine; by EP300: Lys6 and Lys7. The Nuclear localization signal (NLS) motif lies at 8–13 (GAVVED). Residues 16-38 (EPKTEPEAKKSKAGAKKNEKEAV) are compositionally biased toward basic and acidic residues. The segment at 23–33 (AKKSKAGAKKN) is necessary for interaction with NPM1 and for efficient rRNA binding. 4 positions are modified to N6-acetyllysine: Lys27, Lys31, Lys32, and Lys35. A Phosphoserine modification is found at Ser54. The short motif at 64-80 (ICSWNVDGLRAWIKKKG) is the Nuclear export signal (NES) element. Position 65 is an S-nitrosocysteine; alternate (Cys65). A disulfide bridge links Cys65 with Cys93. A Mg(2+)-binding site is contributed by Asp70. The residue at position 93 (Cys93) is an S-nitrosocysteine; alternate. Residue Glu96 coordinates Mg(2+). Residue Tyr171 is part of the active site. The residue at position 197 (Lys197) is an N6-acetyllysine. Mg(2+) is bound by residues Asp210 and Asn212. Residue Asp210 is the Proton donor/acceptor of the active site. Thr233 carries the post-translational modification Phosphothreonine; by CDK5. The segment at 289-318 (QSVLPALCDSKIRSKALGSDHCPITLYLAL) is mitochondrial targeting sequence (MTS). Asp308 contacts Mg(2+). Cys310 carries the post-translational modification S-nitrosocysteine.

Belongs to the DNA repair enzymes AP/ExoA family. In terms of assembly, monomer. Homodimer; disulfide-linked. Component of the SET complex, composed of at least APEX1, SET, ANP32A, HMGB2, NME1 and TREX1. Associates with the dimer XRCC5/XRCC6 in a DNA-dependent manner. Interacts with SIRT1; the interaction is increased in the context of genotoxic stress. Interacts with HDAC1, HDAC2 and HDAC3; the interactions are not dependent on the APEX1 acetylation status. Interacts with XRCC1; the interaction is induced by SIRT1 and increased with the APEX1 acetylated form. Interacts with NPM1 (via N-terminal domain); the interaction is RNA-dependent and decreases in hydrogen peroxide-damaged cells. Interacts (via N-terminus) with YBX1 (via C-terminus); the interaction is increased in presence of APEX1 acetylated at Lys-6 and Lys-7. Interacts with HNRNPL; the interaction is DNA-dependent. Interacts (via N-terminus) with KPNA1 and KPNA2. Interacts with TXN; the interaction stimulates the FOS/JUN AP-1 complex DNA-binding activity in a redox-dependent manner. Interacts with GZMA, KRT8, MDM2, POLB, PRDX6, PRPF19, RPLP0, TOMM20 and WDR77. Binds to CDK5. The cofactor is Mg(2+). Mn(2+) is required as a cofactor. In terms of processing, phosphorylated. Phosphorylation by kinase PKC or casein kinase CK2 results in enhanced redox activity that stimulates binding of the FOS/JUN AP-1 complex to its cognate binding site. AP-endodeoxyribonuclease activity is not affected by CK2-mediated phosphorylation. Phosphorylation of Thr-233 by CDK5 in response to MPP(+)/MPTP (1-methyl-4-phenylpyridinium) reduces AP-endodeoxyribonuclease activity resulting in accumulation of DNA damage and contributing to neuronal death. Acetylated on Lys-6 and Lys-7. Acetylation is increased by the transcriptional coactivator EP300 acetyltransferase, genotoxic agents like H(2)O(2) and methyl methanesulfonate (MMS). Acetylation increases its binding affinity to the negative calcium response element (nCaRE) DNA promoter. The acetylated form induces a stronger binding of YBX1 to the Y-box sequence in the MDR1 promoter than the unacetylated form. Deacetylated on lysines. Lys-6 and Lys-7 are deacetylated by SIRT1. Post-translationally, cleaved at Lys-31 by granzyme A to create the mitochondrial form; leading in reduction of binding to DNA, AP endodeoxyribonuclease activity, redox activation of transcription factors and to enhanced cell death. Cleaved by granzyme K; leading to intracellular ROS accumulation and enhanced cell death after oxidative stress. In terms of processing, cys-69 and Cys-93 are nitrosylated in response to nitric oxide (NO) and lead to the exposure of the nuclear export signal (NES). Ubiquitinated by MDM2; leading to translocation to the cytoplasm and proteasomal degradation. As to expression, the mitochondrial form is expressed in liver (at protein level). Thymus.

The protein resides in the nucleus. It localises to the nucleolus. It is found in the nucleus speckle. Its subcellular location is the endoplasmic reticulum. The protein localises to the cytoplasm. The protein resides in the mitochondrion. The catalysed reaction is Exonucleolytic cleavage in the 3'- to 5'-direction to yield nucleoside 5'-phosphates.. With respect to regulation, NPM1 stimulates endodeoxyribonuclease activity on double-stranded DNA with AP sites, but inhibits endoribonuclease activity on single-stranded RNA containing AP sites. Functionally, multifunctional protein that plays a central role in the cellular response to oxidative stress. The two major activities of APEX1 are DNA repair and redox regulation of transcriptional factors. Functions as an apurinic/apyrimidinic (AP) endodeoxyribonuclease in the DNA base excision repair (BER) pathway of DNA lesions induced by oxidative and alkylating agents. Initiates repair of AP sites in DNA by catalyzing hydrolytic incision of the phosphodiester backbone immediately adjacent to the damage, generating a single-strand break with 5'-deoxyribose phosphate and 3'-hydroxyl ends. Also incises at AP sites in the DNA strand of DNA/RNA hybrids, single-stranded DNA regions of R-loop structures, and single-stranded RNA molecules. Has 3'-5' exoribonuclease activity on mismatched deoxyribonucleotides at the 3' termini of nicked or gapped DNA molecules during short-patch BER. Possesses DNA 3' phosphodiesterase activity capable of removing lesions (such as phosphoglycolate) blocking the 3' side of DNA strand breaks. May also play a role in the epigenetic regulation of gene expression by participating in DNA demethylation. Acts as a loading factor for POLB onto non-incised AP sites in DNA and stimulates the 5'-terminal deoxyribose 5'-phosphate (dRp) excision activity of POLB. Plays a role in the protection from granzyme-mediated cellular repair leading to cell death. Also involved in the DNA cleavage step of class switch recombination (CSR). On the other hand, APEX1 also exerts reversible nuclear redox activity to regulate DNA binding affinity and transcriptional activity of transcriptional factors by controlling the redox status of their DNA-binding domain, such as the FOS/JUN AP-1 complex after exposure to IR. Involved in calcium-dependent down-regulation of parathyroid hormone (PTH) expression by binding to negative calcium response elements (nCaREs). Together with HNRNPL or the dimer XRCC5/XRCC6, associates with nCaRE, acting as an activator of transcriptional repression. Stimulates the YBX1-mediated MDR1 promoter activity, when acetylated at Lys-6 and Lys-7, leading to drug resistance. Also acts as an endoribonuclease involved in the control of single-stranded RNA metabolism. Plays a role in regulating MYC mRNA turnover by preferentially cleaving in between UA and CA dinucleotides of the MYC coding region determinant (CRD). In association with NMD1, plays a role in the rRNA quality control process during cell cycle progression. Associates, together with YBX1, on the MDR1 promoter. Together with NPM1, associates with rRNA. Binds DNA and RNA. The chain is DNA repair nuclease/redox regulator APEX1 (APEX1) from Bos taurus (Bovine).